We begin with the raw amino-acid sequence, 296 residues long: Probable endonuclease 4 (296 aa).

Zn(2+) contacts are provided by histidine 68, histidine 109, glutamate 144, aspartate 178, histidine 181, histidine 213, aspartate 226, histidine 228, and glutamate 258.

The protein belongs to the AP endonuclease 2 family. It depends on Zn(2+) as a cofactor.

It carries out the reaction Endonucleolytic cleavage to 5'-phosphooligonucleotide end-products.. In terms of biological role, endonuclease IV plays a role in DNA repair. It cleaves phosphodiester bonds at apurinic or apyrimidinic (AP) sites, generating a 3'-hydroxyl group and a 5'-terminal sugar phosphate. The sequence is that of Probable endonuclease 4 from Staphylococcus carnosus (strain TM300).